Reading from the N-terminus, the 119-residue chain is Ribonuclease P protein component (119 aa).

Belongs to the RnpA family. Consists of a catalytic RNA component (M1 or rnpB) and a protein subunit.

The enzyme catalyses Endonucleolytic cleavage of RNA, removing 5'-extranucleotides from tRNA precursor.. In terms of biological role, RNaseP catalyzes the removal of the 5'-leader sequence from pre-tRNA to produce the mature 5'-terminus. It can also cleave other RNA substrates such as 4.5S RNA. The protein component plays an auxiliary but essential role in vivo by binding to the 5'-leader sequence and broadening the substrate specificity of the ribozyme. This Shewanella woodyi (strain ATCC 51908 / MS32) protein is Ribonuclease P protein component.